The primary structure comprises 613 residues: Dihydroxy-acid dehydratase (613 aa).

Position 81 (aspartate 81) interacts with Mg(2+). A [2Fe-2S] cluster-binding site is contributed by cysteine 122. Positions 123 and 124 each coordinate Mg(2+). At lysine 124 the chain carries N6-carboxylysine. Cysteine 195 is a [2Fe-2S] cluster binding site. Glutamate 491 lines the Mg(2+) pocket. Catalysis depends on serine 517, which acts as the Proton acceptor.

It belongs to the IlvD/Edd family. As to quaternary structure, homodimer. The cofactor is [2Fe-2S] cluster. Mg(2+) is required as a cofactor.

The catalysed reaction is (2R)-2,3-dihydroxy-3-methylbutanoate = 3-methyl-2-oxobutanoate + H2O. The enzyme catalyses (2R,3R)-2,3-dihydroxy-3-methylpentanoate = (S)-3-methyl-2-oxopentanoate + H2O. It functions in the pathway amino-acid biosynthesis; L-isoleucine biosynthesis; L-isoleucine from 2-oxobutanoate: step 3/4. It participates in amino-acid biosynthesis; L-valine biosynthesis; L-valine from pyruvate: step 3/4. Functions in the biosynthesis of branched-chain amino acids. Catalyzes the dehydration of (2R,3R)-2,3-dihydroxy-3-methylpentanoate (2,3-dihydroxy-3-methylvalerate) into 2-oxo-3-methylpentanoate (2-oxo-3-methylvalerate) and of (2R)-2,3-dihydroxy-3-methylbutanoate (2,3-dihydroxyisovalerate) into 2-oxo-3-methylbutanoate (2-oxoisovalerate), the penultimate precursor to L-isoleucine and L-valine, respectively. This chain is Dihydroxy-acid dehydratase, found in Vibrio atlanticus (strain LGP32) (Vibrio splendidus (strain Mel32)).